The primary structure comprises 116 residues: Large ribosomal subunit protein bL19 (116 aa).

The protein belongs to the bacterial ribosomal protein bL19 family.

This protein is located at the 30S-50S ribosomal subunit interface and may play a role in the structure and function of the aminoacyl-tRNA binding site. The polypeptide is Large ribosomal subunit protein bL19 (Pasteurella multocida (strain Pm70)).